Here is a 337-residue protein sequence, read N- to C-terminus: Putative 2-aminoethylphosphonate-binding periplasmic protein (337 aa).

The signal sequence occupies residues 1 to 21 (MKLSRLALLSVFALASAPSWA).

This sequence belongs to the bacterial solute-binding protein 1 family.

Its subcellular location is the periplasm. Its function is as follows. Probably part of the PhnSTUV complex (TC 3.A.1.11.5) involved in 2-aminoethylphosphonate import. The chain is Putative 2-aminoethylphosphonate-binding periplasmic protein (phnS) from Salmonella paratyphi A (strain ATCC 9150 / SARB42).